We begin with the raw amino-acid sequence, 439 residues long: Hemagglutinin-esterase (439 aa).

Residues 1-22 form the signal peptide; it reads MGCMCIAMAPRTLLLLIGCQLV. The segment at 12–132 is esterase domain 1; sequence TLLLLIGCQL…DNKRWMGNKA (121 aa). The Virion surface portion of the chain corresponds to 23-407; sequence FGFNEPLNIV…PVCIYDPLPV (385 aa). Residue serine 45 is the Nucleophile of the active site. Cysteine 49 and cysteine 70 are joined by a disulfide. N-linked (GlcNAc...) asparagine; by host glycosylation is found at asparagine 94, asparagine 152, asparagine 196, asparagine 246, asparagine 309, and asparagine 316. Cysteines 118 and 167 form a disulfide. The interval 133 to 281 is receptor binding; that stretch reads RFYARVYEKM…GNYKAVSLEY (149 aa). 2 disulfide bridges follow: cysteine 202–cysteine 291 and cysteine 210–cysteine 264. The tract at residues 282–395 is esterase domain 2; the sequence is LLSLPSKAIC…HCPTAANIGY (114 aa). Residues cysteine 322 and cysteine 327 are joined by a disulfide bond. Asparagine 331 is a glycosylation site (N-linked (GlcNAc...) asparagine; by host). Active-site charge relay system residues include aspartate 342 and histidine 345. Asparagine 360 and asparagine 374 each carry an N-linked (GlcNAc...) asparagine; by host glycan. A disulfide bridge links cysteine 363 with cysteine 387. A helical transmembrane segment spans residues 408–428; sequence ILLGVLLGIAVLIIVFLMFYF. Residues 429 to 439 lie on the Intravirion side of the membrane; that stretch reads MTDSGVRLHEA.

It belongs to the influenza type C/coronaviruses hemagglutinin-esterase family. In terms of assembly, homodimer; disulfide-linked. Forms a complex with the M protein in the pre-Golgi. Associates then with S-M complex to form a ternary complex S-M-HE. In terms of processing, N-glycosylated in the host RER.

The protein localises to the virion membrane. Its subcellular location is the host cell membrane. It carries out the reaction N-acetyl-9-O-acetylneuraminate + H2O = N-acetylneuraminate + acetate + H(+). It catalyses the reaction N-acetyl-4-O-acetylneuraminate + H2O = N-acetylneuraminate + acetate + H(+). In terms of biological role, structural protein that makes short spikes at the surface of the virus. Contains receptor binding and receptor-destroying activities. Mediates de-O-acetylation of N-acetyl-4-O-acetylneuraminic acid, which is probably the receptor determinant recognized by the virus on the surface of erythrocytes and susceptible cells. This receptor-destroying activity is important for virus release as it probably helps preventing self-aggregation and ensures the efficient spread of the progeny virus from cell to cell. May serve as a secondary viral attachment protein for initiating infection, the spike protein being the major one. May become a target for both the humoral and the cellular branches of the immune system. The sequence is that of Hemagglutinin-esterase from Murine coronavirus (strain S) (MHV-S).